The following is a 747-amino-acid chain: Ubiquitin carboxyl-terminal hydrolase 13 (747 aa).

One can recognise a USP domain in the interval 140-668 (FGYENFGNTC…TAYVLFYKAM (529 aa)). Cys-149 serves as the catalytic Nucleophile. Disordered regions lie at residues 172-305 (PKKS…RPPD) and 318-367 (YENP…RKKS). Residues 174 to 183 (KSRESDQPRK) are compositionally biased toward basic and acidic residues. Ser-198 bears the Phosphoserine mark. Residues 225–235 (PVNSVNSNTAG) are compositionally biased toward polar residues. Residues 251-260 (HVQDNNKKEG) show a composition bias toward basic and acidic residues. The span at 319–343 (ENPSRGSSNSNNLDLKGESNSSLST) shows a compositional bias: polar residues. His-619 functions as the Proton acceptor in the catalytic mechanism.

Belongs to the peptidase C19 family.

It carries out the reaction Thiol-dependent hydrolysis of ester, thioester, amide, peptide and isopeptide bonds formed by the C-terminal Gly of ubiquitin (a 76-residue protein attached to proteins as an intracellular targeting signal).. The protein is Ubiquitin carboxyl-terminal hydrolase 13 (UBP13) of Saccharomyces cerevisiae (strain ATCC 204508 / S288c) (Baker's yeast).